A 248-amino-acid chain; its full sequence is tRNA (guanine-N(1)-)-methyltransferase (248 aa).

Residues G113 and 133–138 (IGDYVL) each bind S-adenosyl-L-methionine.

It belongs to the RNA methyltransferase TrmD family. As to quaternary structure, homodimer.

The protein localises to the cytoplasm. It carries out the reaction guanosine(37) in tRNA + S-adenosyl-L-methionine = N(1)-methylguanosine(37) in tRNA + S-adenosyl-L-homocysteine + H(+). Specifically methylates guanosine-37 in various tRNAs. This Shewanella piezotolerans (strain WP3 / JCM 13877) protein is tRNA (guanine-N(1)-)-methyltransferase.